A 432-amino-acid polypeptide reads, in one-letter code: Diaminopimelate decarboxylase (432 aa).

Residue Lys-66 is modified to N6-(pyridoxal phosphate)lysine. Residues Gly-248 and 290–293 (EPGR) each bind pyridoxal 5'-phosphate. 3 residues coordinate substrate: Arg-293, Arg-330, and Tyr-334. Cys-361 serves as the catalytic Proton donor. Glu-362 and Tyr-390 together coordinate substrate. Tyr-390 contacts pyridoxal 5'-phosphate.

Belongs to the Orn/Lys/Arg decarboxylase class-II family. LysA subfamily. In terms of assembly, homodimer. It depends on pyridoxal 5'-phosphate as a cofactor.

It catalyses the reaction meso-2,6-diaminopimelate + H(+) = L-lysine + CO2. It participates in amino-acid biosynthesis; L-lysine biosynthesis via DAP pathway; L-lysine from DL-2,6-diaminopimelate: step 1/1. Specifically catalyzes the decarboxylation of meso-diaminopimelate (meso-DAP) to L-lysine. The sequence is that of Diaminopimelate decarboxylase from Bacillus methanolicus.